Reading from the N-terminus, the 327-residue chain is Malate dehydrogenase (327 aa).

Position 12-18 (12-18 (GAAGQIG)) interacts with NAD(+). Substrate contacts are provided by Arg93 and Arg99. NAD(+) contacts are provided by residues Asn106, Gln113, and 130-132 (VGN). Residues Asn132 and Arg163 each contribute to the substrate site. The active-site Proton acceptor is the His188.

The protein belongs to the LDH/MDH superfamily. MDH type 2 family.

It catalyses the reaction (S)-malate + NAD(+) = oxaloacetate + NADH + H(+). In terms of biological role, catalyzes the reversible oxidation of malate to oxaloacetate. This chain is Malate dehydrogenase, found in Cupriavidus pinatubonensis (strain JMP 134 / LMG 1197) (Cupriavidus necator (strain JMP 134)).